The following is a 389-amino-acid chain: Glutaryl-CoA dehydrogenase (389 aa).

Residues arginine 87 and asparagine 91 each contribute to the substrate site. Residues 126-129 (FGIT), serine 135, and 159-161 (WIS) each bind FAD. Serine 135 contacts substrate. Serine 181 serves as a coordination point for substrate. Residues arginine 271, 281 to 284 (FQMN), arginine 340, alanine 344, and 367 to 371 (EGSAN) each bind FAD. Glutamate 367 (proton acceptor) is an active-site residue. Position 385 (arginine 385) interacts with substrate.

It belongs to the acyl-CoA dehydrogenase family. In terms of assembly, homotetramer. The cofactor is FAD.

The catalysed reaction is glutaryl-CoA + A = (2E)-glutaconyl-CoA + AH2. Its pathway is aromatic compound metabolism; benzoyl-CoA degradation. With respect to regulation, inhibited by glutaconyl-CoA. Catalyzes the dehydrogenation of Glutaryl-CoA to glutaconyl-CoA. The sequence is that of Glutaryl-CoA dehydrogenase (Acd) from Desulfococcus multivorans.